Consider the following 62-residue polypeptide: Large ribosomal subunit protein bL28 (62 aa).

Belongs to the bacterial ribosomal protein bL28 family.

This is Large ribosomal subunit protein bL28 from Acetivibrio thermocellus (strain ATCC 27405 / DSM 1237 / JCM 9322 / NBRC 103400 / NCIMB 10682 / NRRL B-4536 / VPI 7372) (Clostridium thermocellum).